Consider the following 161-residue polypeptide: N5-carboxyaminoimidazole ribonucleotide mutase (161 aa).

Substrate is bound by residues serine 9, aspartate 12, and arginine 39.

This sequence belongs to the AIR carboxylase family. Class I subfamily.

It carries out the reaction 5-carboxyamino-1-(5-phospho-D-ribosyl)imidazole + H(+) = 5-amino-1-(5-phospho-D-ribosyl)imidazole-4-carboxylate. It participates in purine metabolism; IMP biosynthesis via de novo pathway; 5-amino-1-(5-phospho-D-ribosyl)imidazole-4-carboxylate from 5-amino-1-(5-phospho-D-ribosyl)imidazole (N5-CAIR route): step 2/2. Its function is as follows. Catalyzes the conversion of N5-carboxyaminoimidazole ribonucleotide (N5-CAIR) to 4-carboxy-5-aminoimidazole ribonucleotide (CAIR). This Vibrio vulnificus (strain CMCP6) protein is N5-carboxyaminoimidazole ribonucleotide mutase.